A 493-amino-acid chain; its full sequence is Cytochrome P450 monooxygenase astA (493 aa).

The helical transmembrane segment at 5–25 (EIILLGLAALAVTYQVIVWIY) threads the bilayer. Residues asparagine 174 and asparagine 286 are each glycosylated (N-linked (GlcNAc...) asparagine). Cysteine 433 serves as a coordination point for heme.

Belongs to the cytochrome P450 family. Heme serves as cofactor.

It is found in the membrane. The enzyme catalyses asperterpenoid A + reduced [NADPH--hemoprotein reductase] + O2 = asperterpenoid C + oxidized [NADPH--hemoprotein reductase] + H2O + H(+). Its pathway is secondary metabolite biosynthesis; terpenoid biosynthesis. Cytochrome P450 monooxygenase; part of the gene cluster that mediates the biosynthesis of the asperterpenoids, sesterterpenes that exhibit anti-tuberculosis activity. The first step of the pathway is performed by the sesterterpene synthase astC that possesses both prenyl transferase and terpene cyclase activity, converting isopentenyl diphosphate and dimethylallyl diphosphate into geranylfarnesyl diphosphate (GFPP) and further converting GFPP into preasperterpenoid A, respectively. The cytochrome P450 monooxygenase astB then dually oxidizes preasperterpenoid A to produce asperterpenoid A along with a minor product, asperterpenoid B. Finally, the cytochrome P450 monooxygenase astA converts asperterpenoid A into asperterpenoid C. The polypeptide is Cytochrome P450 monooxygenase astA (Talaromyces wortmannii (Penicillium wortmannii)).